Consider the following 143-residue polypeptide: MGRRQARETALQVLFQIDLGKTEPDLALNNTAEEFGAGPQEIEFARQLVMGTLEHIEEIDAMIGKVSKEWQLNRMANVDRNIMRLAIFEMNYRADIPKSVSVNEALELSKIFGTPDSVRFINGILGKLLDNKDEAAPVISSLE.

It belongs to the NusB family.

In terms of biological role, involved in transcription antitermination. Required for transcription of ribosomal RNA (rRNA) genes. Binds specifically to the boxA antiterminator sequence of the ribosomal RNA (rrn) operons. The polypeptide is Transcription antitermination protein NusB (Desulforamulus reducens (strain ATCC BAA-1160 / DSM 100696 / MI-1) (Desulfotomaculum reducens)).